We begin with the raw amino-acid sequence, 259 residues long: Ribonuclease T2-B (259 aa).

A signal peptide spans 1–29; it reads MAPAEARGALPGWISVLGWGLALCSLCGA. A disulfide bridge connects residues C53 and C59. H69 is a catalytic residue. 3 disulfides stabilise this stretch: C79/C125, C188/C244, and C206/C217. N-linked (GlcNAc...) asparagine glycans are attached at residues N80 and N110. Active-site residues include E118 and H122. An N-linked (GlcNAc...) asparagine glycan is attached at N216.

This sequence belongs to the RNase T2 family.

It localises to the secreted. Its subcellular location is the lysosome lumen. It is found in the endoplasmic reticulum lumen. The protein resides in the mitochondrion intermembrane space. It carries out the reaction a ribonucleotidyl-ribonucleotide-RNA + H2O = a 3'-end 3'-phospho-ribonucleotide-RNA + a 5'-end dephospho-ribonucleoside-RNA + H(+). The enzyme catalyses an adenylyl-uridine-RNA = a 3'-end 2',3'-cyclophospho-AMP-RNA + a 5'-end dephospho-uridine-RNA. It catalyses the reaction a guanylyl-uridine-RNA = a 3'-end 2',3'-cyclophospho-GMP-RNA + a 5'-end dephospho-uridine-RNA. With respect to regulation, inhibited by Zn(2+) and Cu(2+). Functionally, ribonuclease that plays an essential role in innate immune response by recognizing and degrading RNAs from microbial pathogens that are subsequently sensed by TLR8. Cleaves preferentially single-stranded RNA molecules between purine and uridine residues, which critically contributes to the supply of catabolic uridine and the generation of purine-2',3'-cyclophosphate-terminated oligoribonucleotides. In turn, RNase T2 degradation products promote the RNA-dependent activation of TLR8. In plasmacytoid dendritic cells, it cooperates with PLD3 or PLD4 5'-&gt;3' exonucleases to process RNA fragments and release 2',3'-cyclic guanosine monophosphate (2',3'-cGMP), a potent stimulatory ligand for TLR7. Also plays a key role in degradation of mitochondrial RNA and processing of non-coding RNA imported from the cytosol into mitochondria. Participates as well in degradation of mitochondrion-associated cytosolic rRNAs. The protein is Ribonuclease T2-B of Mus musculus (Mouse).